The chain runs to 143 residues: MAKKVTGQVKLQIAAGKATPAPPVGPALGQAQINIMEFCKQFNAKTASKDLEGFTIPVVITVYNDRSFTFVTKTPPASDLLRKAAGVAKGSGVPNKDKVGKVTEKQVVEIAKQKMPDLNAASVEAAINSIKGTARSMGIDIVP.

Belongs to the universal ribosomal protein uL11 family. Part of the ribosomal stalk of the 50S ribosomal subunit. Interacts with L10 and the large rRNA to form the base of the stalk. L10 forms an elongated spine to which L12 dimers bind in a sequential fashion forming a multimeric L10(L12)X complex. One or more lysine residues are methylated.

Its function is as follows. Forms part of the ribosomal stalk which helps the ribosome interact with GTP-bound translation factors. The polypeptide is Large ribosomal subunit protein uL11 (Koribacter versatilis (strain Ellin345)).